A 426-amino-acid polypeptide reads, in one-letter code: Crinkler effector protein 4 (426 aa).

The interval 20-57 is LQLFLAK domain; that stretch reads VEIDDSAKVSKLKKVIKEENPATITCDAKDLQLFLAKK. The interval 59 to 107 is DWL domain; the sequence is DAWLDGAGAAAVELDEHGHPQGCVQMDPTLWVKNPKHFGDNFQPGEGQV. The short motif at 108 to 114 is the HVLVXXP motif element; it reads HVLVVVP. An effector domain region spans residues 115–426; that stretch reads EGVVGSASET…RSIPTLSYFS (312 aa).

This sequence belongs to the Crinkler effector family.

The protein localises to the secreted. The protein resides in the host nucleus. In terms of biological role, secreted effector that is critical to pathogenesis by suppressing plant immune responsess. Promotes Phytophthora infection by suppressing the H(2)O(2) accumulation and callose deposition. May induce cell death by regulating expression of cell death-related genes. The protein is Crinkler effector protein 4 of Phytophthora capsici.